The sequence spans 137 residues: Urease subunit beta (137 aa).

The interval 113–137 (NGHPNAGVKNDEGKQNANKESGDNR) is disordered.

This sequence belongs to the urease beta subunit family. As to quaternary structure, heterotrimer of UreA (gamma), UreB (beta) and UreC (alpha) subunits. Three heterotrimers associate to form the active enzyme.

It localises to the cytoplasm. The enzyme catalyses urea + 2 H2O + H(+) = hydrogencarbonate + 2 NH4(+). It participates in nitrogen metabolism; urea degradation; CO(2) and NH(3) from urea (urease route): step 1/1. This chain is Urease subunit beta, found in Staphylococcus carnosus (strain TM300).